We begin with the raw amino-acid sequence, 118 residues long: Large ribosomal subunit protein bL19 (118 aa).

It belongs to the bacterial ribosomal protein bL19 family.

Functionally, this protein is located at the 30S-50S ribosomal subunit interface and may play a role in the structure and function of the aminoacyl-tRNA binding site. This is Large ribosomal subunit protein bL19 from Campylobacter jejuni subsp. jejuni serotype O:6 (strain 81116 / NCTC 11828).